The primary structure comprises 158 residues: Large ribosomal subunit protein uL30 (158 aa).

The protein belongs to the universal ribosomal protein uL30 family. Part of the 50S ribosomal subunit.

The polypeptide is Large ribosomal subunit protein uL30 (Saccharolobus islandicus (strain Y.G.57.14 / Yellowstone #1) (Sulfolobus islandicus)).